The chain runs to 387 residues: Succinate--CoA ligase [ADP-forming] subunit beta (387 aa).

Positions 9–236 (KELFAKHNVP…RAATDPLELK (228 aa)) constitute an ATP-grasp domain. ATP is bound by residues Lys45, 52-54 (GRG), Ser94, and Glu99. Asn191 and Asp205 together coordinate Mg(2+). Residues Asn256 and 318–320 (GIT) contribute to the substrate site.

It belongs to the succinate/malate CoA ligase beta subunit family. In terms of assembly, heterotetramer of two alpha and two beta subunits. Mg(2+) is required as a cofactor.

The catalysed reaction is succinate + ATP + CoA = succinyl-CoA + ADP + phosphate. It carries out the reaction GTP + succinate + CoA = succinyl-CoA + GDP + phosphate. The protein operates within carbohydrate metabolism; tricarboxylic acid cycle; succinate from succinyl-CoA (ligase route): step 1/1. Functionally, succinyl-CoA synthetase functions in the citric acid cycle (TCA), coupling the hydrolysis of succinyl-CoA to the synthesis of either ATP or GTP and thus represents the only step of substrate-level phosphorylation in the TCA. The beta subunit provides nucleotide specificity of the enzyme and binds the substrate succinate, while the binding sites for coenzyme A and phosphate are found in the alpha subunit. This Mycobacterium bovis (strain ATCC BAA-935 / AF2122/97) protein is Succinate--CoA ligase [ADP-forming] subunit beta.